Reading from the N-terminus, the 64-residue chain is Large ribosomal subunit protein bL28 (64 aa).

It belongs to the bacterial ribosomal protein bL28 family.

The protein is Large ribosomal subunit protein bL28 of Campylobacter jejuni subsp. jejuni serotype O:6 (strain 81116 / NCTC 11828).